A 493-amino-acid polypeptide reads, in one-letter code: Galactose-1-phosphate uridylyltransferase (493 aa).

This sequence belongs to the galactose-1-phosphate uridylyltransferase type 2 family.

It localises to the cytoplasm. It catalyses the reaction alpha-D-galactose 1-phosphate + UDP-alpha-D-glucose = alpha-D-glucose 1-phosphate + UDP-alpha-D-galactose. It functions in the pathway carbohydrate metabolism; galactose metabolism. The chain is Galactose-1-phosphate uridylyltransferase from Streptococcus pneumoniae (strain Hungary19A-6).